The following is a 557-amino-acid chain: Phosphoribosylaminoimidazole carboxylase, chloroplastic (557 aa).

Residues 108–293 (KVALLPAWIP…QFEQHLPAVV (186 aa)) form the ATP-grasp domain. 132-189 (WDSLDIHFMIKSRRLAYDGRGNFVAKSEEELSSAVDALGGFDRGLYAEKWAPFVKELA) is a binding site for ATP. The segment at 387–557 (CSTLLGFIMG…HGWESYLKNS (171 aa)) is AIR carboxylase catalytic subunit.

It in the C-terminal section; belongs to the AIR carboxylase family. Class I subfamily.

Its subcellular location is the plastid. The protein resides in the chloroplast. The enzyme catalyses 5-amino-1-(5-phospho-D-ribosyl)imidazole-4-carboxylate + H(+) = 5-amino-1-(5-phospho-beta-D-ribosyl)imidazole + CO2. It participates in purine metabolism; IMP biosynthesis via de novo pathway; 5-amino-1-(5-phospho-D-ribosyl)imidazole-4-carboxylate from 5-amino-1-(5-phospho-D-ribosyl)imidazole (carboxylase route): step 1/1. In Vigna aconitifolia (Moth bean), this protein is Phosphoribosylaminoimidazole carboxylase, chloroplastic (PURKE).